A 411-amino-acid chain; its full sequence is Cladofulvin cluster transcriptional coactivator claA (411 aa).

Residues Met1–Ala27 are compositionally biased toward polar residues. The disordered stretch occupies residues Met1–Ala32. In terms of domain architecture, HTH iclR-type spans Leu47–Leu117. Positions Leu77–Arg96 form a DNA-binding region, H-T-H motif.

The protein resides in the nucleus. Transcriptional coactivator; part of the gene cluster that mediates the biosynthesis of cladofulvin, a conidial pigment not required for virulence but that plays a role in fitness and resistance to environmental stresses including UV light and low-temperature stress. With claE, coregulates the production of cladofulvin. The protein is Cladofulvin cluster transcriptional coactivator claA of Passalora fulva (Tomato leaf mold).